The primary structure comprises 198 residues: NADH-quinone oxidoreductase subunit C (198 aa).

The protein belongs to the complex I 30 kDa subunit family. NDH-1 is composed of 14 different subunits. Subunits NuoB, C, D, E, F, and G constitute the peripheral sector of the complex.

The protein resides in the cell inner membrane. It carries out the reaction a quinone + NADH + 5 H(+)(in) = a quinol + NAD(+) + 4 H(+)(out). Its function is as follows. NDH-1 shuttles electrons from NADH, via FMN and iron-sulfur (Fe-S) centers, to quinones in the respiratory chain. The immediate electron acceptor for the enzyme in this species is believed to be ubiquinone. Couples the redox reaction to proton translocation (for every two electrons transferred, four hydrogen ions are translocated across the cytoplasmic membrane), and thus conserves the redox energy in a proton gradient. The polypeptide is NADH-quinone oxidoreductase subunit C (Janthinobacterium sp. (strain Marseille) (Minibacterium massiliensis)).